The primary structure comprises 561 residues: DISARM protein DrmB (561 aa).

Its subcellular location is the cytoplasm. In terms of biological role, component of antiviral defense system DISARM (defense island system associated with restriction-modification), composed of DrmE, DrmA, DrmB, DrmC and DrmMII. DISARM is probably a multi-gene restriction module, this subunit has an unknown function. Expression of DISARM in B.subtilis (strain BEST7003) confers resistance to phages Nf, phi29, phi105, phi3T, SPO1, SPR and SPP1. Protection is over 10(7)-fold against phi3T, 10(4)-10(5)-fold against Nf, phi29, phi105 and SPR, 100-fold against SPO1 and 10-fold against SPP1. DISARM does not interfere with phage adsorption, but instead interferes with (phi3T) DNA replication early in its cycle, preventing replication, circularization and lysogeny and probably causes phage DNA degradation (DNA is degraded in SPP1-infected cells). In Bacillus paralicheniformis (strain ATCC 9945a / NCIMB 11709 / CD-2), this protein is DISARM protein DrmB.